The following is a 316-amino-acid chain: MTVQRKKISLIGAGNIGGTLTHMIALRELGDVVLLDISDGIPQGKALDIAESSPIDGFNVNITGTNRYEDIKNSDAIIITAGIARKPGMSRDDLLQTNAKVMKEVGENIKKYSPNAFVIVVTNPLDAMVSVVHKFSNLPTNMIVGMAGVLDSSRFRYFLASELNISVEDISAFVLGGHGDTMVPLINCASVAGVPLTQIIDMGLITQKKVDEIVERTRNGGKEIVDLLKSGSAYYAPASSAICMLESYLKDKRRILPCAAYLNGEYGVEELFIGVPVIIGKNGIEKILEVKMNDSEQEMFNKSVNSVRELVKSLGS.

NAD(+) contacts are provided by residues 12-17 (GAGNIG) and aspartate 36. Residues arginine 85 and arginine 91 each coordinate substrate. NAD(+) contacts are provided by residues asparagine 98 and 121 to 123 (VTN). The substrate site is built by asparagine 123 and arginine 154. Catalysis depends on histidine 178, which acts as the Proton acceptor.

This sequence belongs to the LDH/MDH superfamily. MDH type 3 family.

It carries out the reaction (S)-malate + NAD(+) = oxaloacetate + NADH + H(+). Functionally, catalyzes the reversible oxidation of malate to oxaloacetate. The polypeptide is Malate dehydrogenase (Wolbachia pipientis wMel).